Consider the following 144-residue polypeptide: Small ribosomal subunit protein eS10A (144 aa).

Residues 90-144 (THKRQVRPTAPRAGRPEPRERASADAGYRRAEKKDEGAAPSGFAPSFRGGFGRPQ) are disordered. Positions 103 to 126 (GRPEPRERASADAGYRRAEKKDEG) are enriched in basic and acidic residues.

It belongs to the eukaryotic ribosomal protein eS10 family. Component of the small ribosomal subunit (SSU). Mature yeast ribosomes consist of a small (40S) and a large (60S) subunit. The 40S small subunit contains 1 molecule of ribosomal RNA (18S rRNA) and at least 33 different proteins. The large 60S subunit contains 3 rRNA molecules (25S, 5.8S and 5S rRNA) and at least 46 different proteins. eS10 interacts with GCN1 (via middle region); this interaction is direct and promotes GCN2 kinase activity.

The protein localises to the cytoplasm. Component of the ribosome, a large ribonucleoprotein complex responsible for the synthesis of proteins in the cell. The small ribosomal subunit (SSU) binds messenger RNAs (mRNAs) and translates the encoded message by selecting cognate aminoacyl-transfer RNA (tRNA) molecules. The large subunit (LSU) contains the ribosomal catalytic site termed the peptidyl transferase center (PTC), which catalyzes the formation of peptide bonds, thereby polymerizing the amino acids delivered by tRNAs into a polypeptide chain. The nascent polypeptides leave the ribosome through a tunnel in the LSU and interact with protein factors that function in enzymatic processing, targeting, and the membrane insertion of nascent chains at the exit of the ribosomal tunnel. eS10 plays a role as a positive regulator of the GCN2 kinase activity by stimulating GCN1-mediated GCN2 activation. The polypeptide is Small ribosomal subunit protein eS10A (rps1001) (Schizosaccharomyces pombe (strain 972 / ATCC 24843) (Fission yeast)).